We begin with the raw amino-acid sequence, 399 residues long: C-type lectin domain family 4 member M (399 aa).

Residues 1–49 (MSDSKEQRVQPLGLLEEDPTTSGIRLFPRDFQFQQTHGHKSSTGCLGHG) lie on the Cytoplasmic side of the membrane. Positions 14 to 15 (LL) match the Endocytosis signal motif. A helical; Signal-anchor for type II membrane protein transmembrane segment spans residues 50 to 70 (PLVLQLLSFTLLAGFLVAILV). Over 71-399 (QVYKGPSSLS…KKPTACFRDE (329 aa)) the chain is Extracellular. The N-linked (GlcNAc...) asparagine glycan is linked to N92. 7 consecutive repeat copies span residues 108-130 (KLQE…PEKS), 131-153 (RLQE…PENS), 154-176 (RLQE…PEKS), 177-199 (KQQE…PEKS), 200-222 (KQQE…PEKS), 223-245 (KQQE…PDQS), and 246-268 (KQQQ…CCRC). The segment at 108 to 269 (KLQEIYQELT…AFERLCCRCP (162 aa)) is 7 X approximate tandem repeats. 4 disulfide bridges follow: C265–C395, C268–C279, C296–C389, and C368–C381. Residues 274–390 (FFQGNCYFIS…CNVDNYWICK (117 aa)) enclose the C-type lectin domain. Ca(2+) contacts are provided by E359, N361, S363, E366, N377, and D378. N-linked (GlcNAc...) asparagine glycosylation is present at N361.

Homotetramer.

It is found in the membrane. Its function is as follows. Probable pathogen-recognition receptor involved in peripheral immune surveillance in liver. May mediate the endocytosis of pathogens which are subsequently degraded in lysosomal compartments. Probably recognizes in a calcium-dependent manner high mannose N-linked oligosaccharides in a variety of pathogen antigens. Is a receptor for ICAM3, probably by binding to mannose-like carbohydrates. In Nomascus concolor (Black crested gibbon), this protein is C-type lectin domain family 4 member M (CLEC4M).